We begin with the raw amino-acid sequence, 379 residues long: MSATLALTEQLIARASVTPDDQHCQQIMTERLAALGFECETIASHGVTNLWAVKRGTDGRDGKLLAFAGHTDVVPTGPLEQWTSPPFVPAHRDGKLYGRGAADMKTSLAAFVVASEEFVAAHPDHRGAIAFLITSDEEGPATDGTVKVVELLQERGERLDYCIVGEPTSTAELGDVVKNGRRGSMSGELVIKGVQGHIAYPHLAKNPIHLLAPALAELAAEQWDAGNEYFPPTTWQVSNLHAGTGATNVIPGHADLLFNFRFSTASTVEGLQARVHAILDKHGLEYTLKWSVSGLPFLTPRGELSGALEHAIRTETGITTELSTTGGTSDGRFIARICPQVIEFGPPNGSIHKIDEHIEVRFVDPLKNVYRRALEQLIA.

A Zn(2+)-binding site is contributed by H70. D72 is a catalytic residue. Zn(2+) is bound at residue D103. Residue E137 is the Proton acceptor of the active site. 3 residues coordinate Zn(2+): E138, E166, and H352.

It belongs to the peptidase M20A family. DapE subfamily. As to quaternary structure, homodimer. Requires Zn(2+) as cofactor. Co(2+) serves as cofactor.

It carries out the reaction N-succinyl-(2S,6S)-2,6-diaminopimelate + H2O = (2S,6S)-2,6-diaminopimelate + succinate. Its pathway is amino-acid biosynthesis; L-lysine biosynthesis via DAP pathway; LL-2,6-diaminopimelate from (S)-tetrahydrodipicolinate (succinylase route): step 3/3. Its function is as follows. Catalyzes the hydrolysis of N-succinyl-L,L-diaminopimelic acid (SDAP), forming succinate and LL-2,6-diaminopimelate (DAP), an intermediate involved in the bacterial biosynthesis of lysine and meso-diaminopimelic acid, an essential component of bacterial cell walls. The sequence is that of Succinyl-diaminopimelate desuccinylase from Burkholderia cenocepacia (strain HI2424).